A 233-amino-acid chain; its full sequence is Sugar fermentation stimulation protein homolog (233 aa).

It belongs to the SfsA family.

This chain is Sugar fermentation stimulation protein homolog, found in Acetivibrio thermocellus (strain ATCC 27405 / DSM 1237 / JCM 9322 / NBRC 103400 / NCIMB 10682 / NRRL B-4536 / VPI 7372) (Clostridium thermocellum).